We begin with the raw amino-acid sequence, 366 residues long: Phospho-N-acetylmuramoyl-pentapeptide-transferase (366 aa).

10 helical membrane passes run 27 to 47 (AALF…INSL), 71 to 91 (TPTM…LLWA), 93 to 113 (LSNV…AIGF), 134 to 154 (LGIE…TALA), 174 to 194 (FLIN…VGAG), 205 to 225 (GLAI…AYLA), 245 to 265 (LAVV…FNAP), 268 to 288 (AIFM…TVAV), 294 to 314 (IVMA…IIQV), and 343 to 363 (QVVI…LSTL).

It belongs to the glycosyltransferase 4 family. MraY subfamily. Requires Mg(2+) as cofactor.

The protein resides in the cell inner membrane. The catalysed reaction is UDP-N-acetyl-alpha-D-muramoyl-L-alanyl-gamma-D-glutamyl-meso-2,6-diaminopimeloyl-D-alanyl-D-alanine + di-trans,octa-cis-undecaprenyl phosphate = di-trans,octa-cis-undecaprenyl diphospho-N-acetyl-alpha-D-muramoyl-L-alanyl-D-glutamyl-meso-2,6-diaminopimeloyl-D-alanyl-D-alanine + UMP. The protein operates within cell wall biogenesis; peptidoglycan biosynthesis. Catalyzes the initial step of the lipid cycle reactions in the biosynthesis of the cell wall peptidoglycan: transfers peptidoglycan precursor phospho-MurNAc-pentapeptide from UDP-MurNAc-pentapeptide onto the lipid carrier undecaprenyl phosphate, yielding undecaprenyl-pyrophosphoryl-MurNAc-pentapeptide, known as lipid I. In Rhizobium etli (strain ATCC 51251 / DSM 11541 / JCM 21823 / NBRC 15573 / CFN 42), this protein is Phospho-N-acetylmuramoyl-pentapeptide-transferase.